A 201-amino-acid chain; its full sequence is Twin horsetail protein 2 (201 aa).

Its subcellular location is the nucleus. Its function is as follows. Required for correct meiotic chromosome segregation and recombination. In Schizosaccharomyces pombe (strain 972 / ATCC 24843) (Fission yeast), this protein is Twin horsetail protein 2 (tht2).